An 87-amino-acid chain; its full sequence is MEVLMMEERIYTIPLRDVINKSVRTKRAPRAIKKIKQFLKRHMKAEIVKIDNELNEKIWERGIQKPPARVRVKAVKEGNVVIATLAE.

This sequence belongs to the eukaryotic ribosomal protein eL31 family.

In Methanocaldococcus jannaschii (strain ATCC 43067 / DSM 2661 / JAL-1 / JCM 10045 / NBRC 100440) (Methanococcus jannaschii), this protein is Large ribosomal subunit protein eL31 (rpl31e).